The following is a 100-amino-acid chain: Co-chaperonin GroES (100 aa).

The protein belongs to the GroES chaperonin family. Heptamer of 7 subunits arranged in a ring. Interacts with the chaperonin GroEL.

The protein localises to the cytoplasm. Its function is as follows. Together with the chaperonin GroEL, plays an essential role in assisting protein folding. The GroEL-GroES system forms a nano-cage that allows encapsulation of the non-native substrate proteins and provides a physical environment optimized to promote and accelerate protein folding. GroES binds to the apical surface of the GroEL ring, thereby capping the opening of the GroEL channel. In Mycobacterium marinum (strain ATCC BAA-535 / M), this protein is Co-chaperonin GroES.